Reading from the N-terminus, the 193-residue chain is AP-3 complex subunit sigma-2 (193 aa).

It belongs to the adaptor complexes small subunit family. As to quaternary structure, adaptor protein complex 3 (AP-3) is a heterotetramer composed of two large adaptins (delta-type subunit AP3D1 and beta-type subunit AP3B1 or AP3B2), a medium adaptin (mu-type subunit AP3M1 or AP3M2) and a small adaptin (sigma-type subunit APS1 or AP3S2). Interacts with AGAP1. AP-3 associates with the BLOC-1 complex. In terms of tissue distribution, present in all adult tissues examined.

The protein resides in the golgi apparatus. The protein localises to the cytoplasmic vesicle membrane. In terms of biological role, part of the AP-3 complex, an adaptor-related complex which is not clathrin-associated. The complex is associated with the Golgi region as well as more peripheral structures. It facilitates the budding of vesicles from the Golgi membrane and may be directly involved in trafficking to lysosomes. In concert with the BLOC-1 complex, AP-3 is required to target cargos into vesicles assembled at cell bodies for delivery into neurites and nerve terminals. This chain is AP-3 complex subunit sigma-2 (AP3S2), found in Homo sapiens (Human).